The sequence spans 479 residues: Probable periplasmic serine endoprotease DegP-like (479 aa).

A signal peptide spans 1 to 27 (MSMPSLKKYAAALFAVFLMGQSVAAHA). Catalysis depends on charge relay system residues H118, D148, and S221. Substrate-binding positions include 219–221 (GNS) and 276–280 (LGVVI). PDZ domains lie at 265–356 (LKAS…VREG) and 362–468 (KVAV…LRQG). The interval 368–390 (MPADDGDEATNDAAPSAERSSNR) is disordered.

Belongs to the peptidase S1C family.

It localises to the periplasm. It catalyses the reaction Acts on substrates that are at least partially unfolded. The cleavage site P1 residue is normally between a pair of hydrophobic residues, such as Val-|-Val.. Its function is as follows. Might be efficient in the degradation of transiently denatured and unfolded proteins which accumulate in the periplasm following stress conditions. In Pseudomonas fulva (strain 12-X), this protein is Probable periplasmic serine endoprotease DegP-like.